Here is a 321-residue protein sequence, read N- to C-terminus: Glucokinase (321 aa).

8–13 (GDVGGT) serves as a coordination point for ATP.

Belongs to the bacterial glucokinase family.

The protein resides in the cytoplasm. It carries out the reaction D-glucose + ATP = D-glucose 6-phosphate + ADP + H(+). This chain is Glucokinase, found in Psychromonas ingrahamii (strain DSM 17664 / CCUG 51855 / 37).